Consider the following 492-residue polypeptide: Probable glycine dehydrogenase (decarboxylating) subunit 2 (492 aa).

An N6-(pyridoxal phosphate)lysine modification is found at K274.

The protein belongs to the GcvP family. C-terminal subunit subfamily. The glycine cleavage system is composed of four proteins: P, T, L and H. In this organism, the P 'protein' is a heterodimer of two subunits. Pyridoxal 5'-phosphate serves as cofactor.

The enzyme catalyses N(6)-[(R)-lipoyl]-L-lysyl-[glycine-cleavage complex H protein] + glycine + H(+) = N(6)-[(R)-S(8)-aminomethyldihydrolipoyl]-L-lysyl-[glycine-cleavage complex H protein] + CO2. In terms of biological role, the glycine cleavage system catalyzes the degradation of glycine. The P protein binds the alpha-amino group of glycine through its pyridoxal phosphate cofactor; CO(2) is released and the remaining methylamine moiety is then transferred to the lipoamide cofactor of the H protein. The polypeptide is Probable glycine dehydrogenase (decarboxylating) subunit 2 (Staphylococcus haemolyticus (strain JCSC1435)).